Here is a 637-residue protein sequence, read N- to C-terminus: Serine/threonine-protein kinase Nek11 (637 aa).

The Protein kinase domain occupies 29-287 (YVLQQKLGSG…AIEILKIPYI (259 aa)). ATP is bound by residues 35-43 (LGSGSFGTV) and Lys61. The Proton acceptor role is filled by Asp158. Ser273 is subject to Phosphoserine; by CHEK1. Residues 302–385 (TLEDKNLDCQ…QELRSRNFQQ (84 aa)) are a coiled coil. The segment at 399-446 (GMEEKEEQPEGRPSCSPQDEDEERWQDREEEFDEPTLENLSEPQPIPS) is disordered. Residues 416–434 (QDEDEERWQDREEEFDEPT) are compositionally biased toward acidic residues.

Belongs to the protein kinase superfamily. NEK Ser/Thr protein kinase family. NIMA subfamily. Interacts with NEK2. Mn(2+) is required as a cofactor. Mg(2+) serves as cofactor. Post-translationally, phosphorylated by NEK2. Phosphorylation at Ser-273 is important for its activation.

Its subcellular location is the nucleus. The protein localises to the nucleolus. The catalysed reaction is L-seryl-[protein] + ATP = O-phospho-L-seryl-[protein] + ADP + H(+). It catalyses the reaction L-threonyl-[protein] + ATP = O-phospho-L-threonyl-[protein] + ADP + H(+). With respect to regulation, autorepressed by intramolecular binding of the C-terminus which dissociates following phosphorylation by NEK2. Activated in response to DNA damage. Inhibited by zinc. Functionally, protein kinase which plays an important role in the G2/M checkpoint response to DNA damage. Controls degradation of CDC25A by directly phosphorylating it on residues whose phosphorylation is required for BTRC-mediated polyubiquitination and degradation. This is Serine/threonine-protein kinase Nek11 (NEK11) from Macaca fascicularis (Crab-eating macaque).